The sequence spans 376 residues: 1-acyl-sn-glycerol-3-phosphate acyltransferase gamma (376 aa).

The Cytoplasmic portion of the chain corresponds to 1–124; it reads MGLLAFLKTQ…LGSSKVLAKK (124 aa). An HXXXXD motif motif is present at residues 96–101; the sequence is HNFEID. The helical transmembrane segment at 125 to 145 threads the bilayer; the sequence is ELLYVPLIGWTWYFLEIVFCK. Topologically, residues 146-316 are lumenal; it reads RKWEEDRDTV…TLLNFLSWAT (171 aa). The helical transmembrane segment at 317-339 threads the bilayer; the sequence is ILLSPLFSFVLGVFASGSPLLIL. Topologically, residues 340–376 are cytoplasmic; it reads TFLGFVGAASFGVRRLIGVTEIEKGSSYGNQEFKKKE.

It belongs to the 1-acyl-sn-glycerol-3-phosphate acyltransferase family. Widely expressed with highest levels in testis, pancreas and kidney, followed by spleen, lung, adipose tissue and liver.

Its subcellular location is the endoplasmic reticulum membrane. It localises to the nucleus envelope. It carries out the reaction a 1-acyl-sn-glycero-3-phosphate + an acyl-CoA = a 1,2-diacyl-sn-glycero-3-phosphate + CoA. The enzyme catalyses pentadecanoyl-CoA + 1-(9Z-octadecenoyl)-sn-glycero-3-phosphate = 1-(9Z)-octadecenoyl-2-pentadecanoyl-sn-glycero-3-phosphate + CoA. The catalysed reaction is heptadecanoyl-CoA + 1-(9Z-octadecenoyl)-sn-glycero-3-phosphate = 1-(9Z)-octadecenoyl-2-heptadecanoyl-sn-glycero-3-phosphate + CoA. It catalyses the reaction 1-(9Z-octadecenoyl)-sn-glycero-3-phosphate + octadecanoyl-CoA = 1-(9Z-octadecenoyl)-2-octadecanoyl-sn-glycero-3-phosphate + CoA. It carries out the reaction nonadecanoyl-CoA + 1-(9Z-octadecenoyl)-sn-glycero-3-phosphate = 1-(9Z)-octadecenoyl-2-nonadecanoyl-sn-glycero-3-phosphate + CoA. The enzyme catalyses 1-(9Z-octadecenoyl)-sn-glycero-3-phosphate + (5Z,8Z,11Z,14Z)-eicosatetraenoyl-CoA = 1-(9Z)-octadecenoyl-2-(5Z,8Z,11Z,14Z)-eicosatetraenoyl-sn-glycero-3-phosphate + CoA. The catalysed reaction is 1-(9Z-octadecenoyl)-sn-glycero-3-phosphate + (9Z)-octadecenoyl-CoA = 1,2-di-(9Z-octadecenoyl)-sn-glycero-3-phosphate + CoA. It catalyses the reaction 1-(9Z-octadecenoyl)-sn-glycero-3-phosphate + (9Z,12Z)-octadecadienoyl-CoA = 1-(9Z)-octadecenoyl-2-(9Z,12Z)-octadecadienoyl-sn-glycero-3-phosphate + CoA. It carries out the reaction 1-(9Z-octadecenoyl)-sn-glycero-3-phosphocholine + (5Z,8Z,11Z,14Z)-eicosatetraenoyl-CoA = 1-(9Z)-octadecenoyl-2-(5Z,8Z,11Z,14Z)-icosatetraenoyl-sn-glycero-3-phosphocholine + CoA. The enzyme catalyses 1-(9Z-octadecenoyl)-sn-glycero-3-phospho-(1D-myo-inositol) + (5Z,8Z,11Z,14Z)-eicosatetraenoyl-CoA = 1-(9Z-octadecenoyl)-2-(5Z,8Z,11Z,14Z-eicosatetraenoyl)-sn-glycero-3-phospho-1D-myo-inositol + CoA. The catalysed reaction is 1-(9Z-octadecenoyl)-sn-glycero-3-phospho-L-serine + (5Z,8Z,11Z,14Z)-eicosatetraenoyl-CoA = 1-(9Z-octadecenoyl)-2-(5Z,8Z,11Z,14Z-eicosatetraenoyl)-sn-glycero-3-phospho-L-serine + CoA. It catalyses the reaction 1-hexadecanoyl-sn-glycero-3-phosphate + (9Z)-octadecenoyl-CoA = 1-hexadecanoyl-2-(9Z-octadecenoyl)-sn-glycero-3-phosphate + CoA. It carries out the reaction 1-hexadecanoyl-sn-glycero-3-phosphate + (5Z,8Z,11Z,14Z)-eicosatetraenoyl-CoA = 1-hexadecanoyl-2-(5Z,8Z,11Z,14Z-eicosatetraenoyl)-sn-glycero-3-phosphate + CoA. The enzyme catalyses 1-heptadecanoyl-sn-glycero-3-phosphate + (5Z,8Z,11Z,14Z)-eicosatetraenoyl-CoA = 1-heptadecanoyl-2-(5Z,8Z,11Z,14Z)-eicosatetraenoyl-sn-glycero-3-phosphate + CoA. The catalysed reaction is 1-octadecanoyl-sn-glycero-3-phosphate + (9Z)-octadecenoyl-CoA = 1-octadecanoyl-2-(9Z-octadecenoyl)-sn-glycero-3-phosphate + CoA. It catalyses the reaction 1-octadecanoyl-sn-glycero-3-phosphate + (5Z,8Z,11Z,14Z)-eicosatetraenoyl-CoA = 1-octadecanoyl-2-(5Z,8Z,11Z,14Z-eicosatetraenoyl)-sn-glycero-3-phosphate + CoA. It carries out the reaction 1-(9Z-octadecenoyl)-sn-glycero-3-phosphate + hexadecanoyl-CoA = 1-hexadecanoyl-2-(9Z-octadecenoyl)-sn-glycero-3-phosphate + CoA. The enzyme catalyses 1-O-(9Z-octadecenyl)-sn-glycero-3-phosphate + (5Z,8Z,11Z,14Z)-eicosatetraenoyl-CoA = 1-O-(9Z-octadecenyl)-2-(5Z,8Z,11Z,14Z-eicosatetraenoyl)-sn-glycero-3-phosphate + CoA. The catalysed reaction is a 1-acyl-sn-glycero-3-phospho-(1D-myo-inositol) + (5Z,8Z,11Z,14Z)-eicosatetraenoyl-CoA = a 1-acyl-2-(5Z,8Z,11Z,14Z-eicosatetraenoyl)-sn-glycero-3-phospho-(1D-myo-inositol) + CoA. It functions in the pathway phospholipid metabolism; CDP-diacylglycerol biosynthesis; CDP-diacylglycerol from sn-glycerol 3-phosphate: step 2/3. Its function is as follows. Converts 1-acyl-sn-glycerol-3-phosphate (lysophosphatidic acid or LPA) into 1,2-diacyl-sn-glycerol-3-phosphate (phosphatidic acid or PA) by incorporating an acyl moiety at the sn-2 position of the glycerol backbone. Acts on LPA containing saturated or unsaturated fatty acids C16:0-C20:4 at the sn-1 position using C18:1, C20:4 or C18:2-CoA as the acyl donor. Also acts on lysophosphatidylcholine, lysophosphatidylinositol and lysophosphatidylserine using C18:1 or C20:4-CoA. Has a preference for arachidonoyl-CoA as a donor. Also has a modest lysophosphatidylinositol acyltransferase (LPIAT) activity, converts lysophosphatidylinositol (LPI) into phosphatidylinositol. The chain is 1-acyl-sn-glycerol-3-phosphate acyltransferase gamma (AGPAT3) from Homo sapiens (Human).